Here is a 143-residue protein sequence, read N- to C-terminus: Hemoglobin subunit alpha (143 aa).

The residue at position 2 (Ser2) is an N-acetylserine. One can recognise a Globin domain in the interval 2–143 (SLSDKDKAAV…LALALSEKYR (142 aa)). His60 is an O2 binding site. His89 is a binding site for heme b.

The protein belongs to the globin family. As to quaternary structure, heterotetramer of two alpha chains and two beta chains. In terms of tissue distribution, red blood cells.

Functionally, involved in oxygen transport from gills to the various peripheral tissues. In Cyprinus carpio (Common carp), this protein is Hemoglobin subunit alpha (hba).